A 382-amino-acid polypeptide reads, in one-letter code: S-adenosylmethionine synthase (382 aa).

ATP is bound at residue His16. Asp18 is a binding site for Mg(2+). Glu44 provides a ligand contact to K(+). Residues Glu57 and Gln100 each contribute to the L-methionine site. Positions Gln100–Glu110 are flexible loop. ATP is bound by residues Asp165–Lys167, Asp240, Arg246–Lys247, Ala263, and Lys267. Position 240 (Asp240) interacts with L-methionine. Residue Lys271 coordinates L-methionine.

It belongs to the AdoMet synthase family. Homotetramer; dimer of dimers. The cofactor is Mg(2+). Requires K(+) as cofactor.

Its subcellular location is the cytoplasm. The catalysed reaction is L-methionine + ATP + H2O = S-adenosyl-L-methionine + phosphate + diphosphate. It functions in the pathway amino-acid biosynthesis; S-adenosyl-L-methionine biosynthesis; S-adenosyl-L-methionine from L-methionine: step 1/1. In terms of biological role, catalyzes the formation of S-adenosylmethionine (AdoMet) from methionine and ATP. The overall synthetic reaction is composed of two sequential steps, AdoMet formation and the subsequent tripolyphosphate hydrolysis which occurs prior to release of AdoMet from the enzyme. This chain is S-adenosylmethionine synthase, found in Saccharophagus degradans (strain 2-40 / ATCC 43961 / DSM 17024).